The primary structure comprises 206 residues: 2,3-bisphosphoglycerate-dependent phosphoglycerate mutase (206 aa).

Residues 9-16 (RHGQSEWN), 22-23 (TG), Arg-61, 88-91 (ERNY), Lys-99, 115-116 (RR), and 159-160 (GN) contribute to the substrate site. His-10 acts as the Tele-phosphohistidine intermediate in catalysis. The active-site Proton donor/acceptor is the Glu-88.

Belongs to the phosphoglycerate mutase family. BPG-dependent PGAM subfamily. Homodimer.

The enzyme catalyses (2R)-2-phosphoglycerate = (2R)-3-phosphoglycerate. Its pathway is carbohydrate degradation; glycolysis; pyruvate from D-glyceraldehyde 3-phosphate: step 3/5. Its function is as follows. Catalyzes the interconversion of 2-phosphoglycerate and 3-phosphoglycerate. The polypeptide is 2,3-bisphosphoglycerate-dependent phosphoglycerate mutase (Bartonella tribocorum (strain CIP 105476 / IBS 506)).